Reading from the N-terminus, the 161-residue chain is Large ribosomal subunit protein uL15 (161 aa).

The segment at 1–47 (MKLHELHDNPGANRKKKRVARGPGSGKGKTAGRGIKGQTSRSGVALN) is disordered. Positions 23-35 (PGSGKGKTAGRGI) are enriched in gly residues.

It belongs to the universal ribosomal protein uL15 family. In terms of assembly, part of the 50S ribosomal subunit.

In terms of biological role, binds to the 23S rRNA. The protein is Large ribosomal subunit protein uL15 of Paracoccus denitrificans (strain Pd 1222).